A 261-amino-acid chain; its full sequence is uncharacterized protein (261 aa).

The first 22 residues, 1-22 (MGYLKKVGMCISLLIVIIFVTS), serve as a signal peptide directing secretion. Cys-23 carries the N-palmitoyl cysteine lipid modification. Residue Cys-23 is the site of S-diacylglycerol cysteine attachment.

Belongs to the staphylococcal tandem lipoprotein family.

It localises to the cell membrane. This is an uncharacterized protein from Staphylococcus aureus (strain bovine RF122 / ET3-1).